Here is a 133-residue protein sequence, read N- to C-terminus: Large ribosomal subunit protein bL12 (133 aa).

This sequence belongs to the bacterial ribosomal protein bL12 family. In terms of assembly, homodimer. Part of the ribosomal stalk of the 50S ribosomal subunit. Forms a multimeric L10(L12)X complex, where L10 forms an elongated spine to which 2 to 4 L12 dimers bind in a sequential fashion. Binds GTP-bound translation factors.

Forms part of the ribosomal stalk which helps the ribosome interact with GTP-bound translation factors. Is thus essential for accurate translation. This chain is Large ribosomal subunit protein bL12, found in Trichodesmium erythraeum (strain IMS101).